Here is a 382-residue protein sequence, read N- to C-terminus: Type II secretion system protein L (382 aa).

Residues 1–233 are Cytoplasmic-facing; the sequence is MSGVSALFLP…QQSSQWRRWR (233 aa). A helical transmembrane segment spans residues 234 to 254; it reads PLLGLVGLWLVLQWGFTLVQA. Topologically, residues 255-382 are periplasmic; the sequence is WQLQREGDRY…TVSARLVIGG (128 aa).

Belongs to the GSP L family. As to quaternary structure, type II secretion system is composed of four main components: the outer membrane complex, the inner membrane complex, the cytoplasmic secretion ATPase and the periplasm-spanning pseudopilus. Forms homodimers. Interacts with XcpZ/GspM. Interacts with XcpR/GspE and XcpS/GspF.

The protein resides in the cell inner membrane. Functionally, inner membrane component of the type II secretion system required for the energy-dependent secretion of extracellular factors such as proteases and toxins from the periplasm. Plays a role in the complex assembly and recruits XcpZ resulting in a stable complex in the inner membrane. Provides thus a link between the energy-providing XcpR protein in the cytoplasm and the rest of the T2SS machinery. The polypeptide is Type II secretion system protein L (xcpY) (Pseudomonas aeruginosa (strain ATCC 15692 / DSM 22644 / CIP 104116 / JCM 14847 / LMG 12228 / 1C / PRS 101 / PAO1)).